We begin with the raw amino-acid sequence, 1525 residues long: Multidrug resistance protein mrp-7 (1525 aa).

Residues 1–24 are Extracellular-facing; the sequence is MLSSFCGDGHPFSTGLPNVSICAQ. N-linked (GlcNAc...) asparagine glycosylation occurs at Asn18. Residues 25–45 traverse the membrane as a helical segment; sequence HTVLVWVPAAFFLLTLPFLSA. The Cytoplasmic segment spans residues 46–66; sequence QCHLTAQRFARLPFSAHFIIK. Residues 67 to 87 traverse the membrane as a helical segment; it reads LLLVAFLAANSLATWCYVLFS. Residues 88 to 94 lie on the Extracellular side of the membrane; that stretch reads KNSYAAA. The chain crosses the membrane as a helical span at residues 95-115; the sequence is YYVYPGLWVLVWTGTFLVHLI. Over 116–118 the chain is Cytoplasmic; the sequence is RLR. The helical transmembrane segment at 119 to 139 threads the bilayer; the sequence is CGLVSSGIQHVTSLIFLLCGA. At 140-165 the chain is on the extracellular side; the sequence is PEFYQWIRMENSNSFPNDLTTTDSAQ. Residues 166–186 form a helical membrane-spanning segment; that stretch reads FLSIAYLSWYSALILYTFSLC. Residues 187 to 346 lie on the Cytoplasmic side of the membrane; it reads FADPRGAKTD…APFWKGMALS (160 aa). Positions 305-587 constitute an ABC transmembrane type-1 1 domain; it reads LLASTLKFVS…IALLINQAVQ (283 aa). A helical transmembrane segment spans residues 347-367; that stretch reads ILMFSVSELRSLILNGYFYIM. Over 368 to 434 the chain is Extracellular; that stretch reads FRMGTKIQTS…SCPYQITFAL (67 aa). The chain crosses the membrane as a helical span at residues 435–455; sequence VYLFITLGYSALPGVVIMVIF. Over 456–535 the chain is Cytoplasmic; it reads VPMNIISSMI…NILDSFNTAS (80 aa). Residues 536-556 traverse the membrane as a helical segment; it reads PFLVALFSFGTFVLSNPSHLL. Residues 557 to 561 lie on the Extracellular side of the membrane; sequence TPQIA. A helical membrane pass occupies residues 562–582; sequence FVSLALFNQLRSPMTMIALLI. The Cytoplasmic segment spans residues 583–953; the sequence is NQAVQAVVSN…ATYQLYVKAA (371 aa). Positions 622-849 constitute an ABC transporter 1 domain; the sequence is VRVENLTASW…RGLFFDFMEE (228 aa). 659–666 serves as a coordination point for ATP; sequence GKVGSGKS. The disordered stretch occupies residues 900–925; the sequence is ELTTQISTMSSPEKPPTGTSPAAATE. The chain crosses the membrane as a helical span at residues 954 to 974; sequence GYLLSIAFIGFFIVYMTLQIL. The ABC transmembrane type-1 2 domain maps to 959–1245; that stretch reads IAFIGFFIVY…AVRQVSEIEA (287 aa). Residues 975 to 1005 lie on the Extracellular side of the membrane; sequence RSFWLSAWSDEYDPDSPSAHPMAKGWRLGVY. The helical transmembrane segment at 1006–1026 threads the bilayer; sequence GALGFSETACFFVALLALVFV. Residues 1027-1068 lie on the Cytoplasmic side of the membrane; sequence GQRASKNLHGPLIHNLMRSPMSFYDTTPLGRILNRCAKDIET. A helical membrane pass occupies residues 1069-1089; it reads IDMMLPMNFRYLVMCVLQVAF. A topological domain (extracellular) is located at residue Thr1090. A helical membrane pass occupies residues 1091-1111; that stretch reads LIVIIISTPLFAVVILPLALI. Residues 1112 to 1184 are Cytoplasmic-facing; that stretch reads YLIFLRYYVP…RYSSLVSNRW (73 aa). Residues 1185–1205 form a helical membrane-spanning segment; it reads LAVRLEFVGNCIIFFAALFAV. Residues 1206–1525 are Extracellular-facing; it reads LSKEFGWITS…ADAAEQDKHE (320 aa). N-linked (GlcNAc...) asparagine glycosylation is present at Asn1228. The ABC transporter 2 domain occupies 1282–1516; sequence VKFDGYSTRY…KNSAFAKMVA (235 aa). ATP is bound at residue 1316 to 1323; sequence GRTGAGKS. N-linked (GlcNAc...) asparagine glycans are attached at residues Asn1358 and Asn1418.

It belongs to the ABC transporter superfamily. ABCC family. Conjugate transporter (TC 3.A.1.208) subfamily. In terms of tissue distribution, expressed in head neurons, including the dopamine (DA) motor neuron, and other cells in the body.

It localises to the cell membrane. In terms of biological role, negatively regulates cellular toxicity by mediating the export of environmental toxicants such as methylmercury out of the cell. Plays a role in inhibiting methylmercury-induced dopamine (DA) motor neuron degeneration. Not involved in Mn(2+)- or Al(3+)-associated toxicity. The polypeptide is Multidrug resistance protein mrp-7 (Caenorhabditis elegans).